The sequence spans 498 residues: Ribose import ATP-binding protein RbsA (498 aa).

2 ABC transporter domains span residues 2-237 (LALQ…VGRD) and 247-491 (VTPG…TGQQ). 34-41 (GENGAGKS) serves as a coordination point for ATP.

It belongs to the ABC transporter superfamily. Ribose importer (TC 3.A.1.2.1) family. The complex is composed of an ATP-binding protein (RbsA), two transmembrane proteins (RbsC) and a solute-binding protein (RbsB).

It localises to the cell membrane. It carries out the reaction D-ribose(out) + ATP + H2O = D-ribose(in) + ADP + phosphate + H(+). Functionally, part of the ABC transporter complex RbsABC involved in ribose import. Responsible for energy coupling to the transport system. This chain is Ribose import ATP-binding protein RbsA, found in Deinococcus geothermalis (strain DSM 11300 / CIP 105573 / AG-3a).